Consider the following 854-residue polypeptide: Gamma-secretase-activating protein (854 aa).

This sequence belongs to the GSAP family. Interacts with APP; specifically interacts with the CTF-alpha product of APP. Interacts with the gamma-secretase complex. The protein is first synthesized as a holoprotein form of 98 kDa and rapidly processed into the gamma-secretase-activating protein 16 kDa C-terminal form, which constitutes the predominant form. As to expression, widely expressed.

The protein resides in the golgi apparatus. It localises to the trans-Golgi network. Regulator of gamma-secretase activity, which specifically activates the production of amyloid-beta protein (amyloid-beta protein 40 and amyloid-beta protein 42), without affecting the cleavage of other gamma-secretase targets such has Notch. The gamma-secretase complex is an endoprotease complex that catalyzes the intramembrane cleavage of integral membrane proteins such as Notch receptors and APP (amyloid-beta precursor protein). Specifically promotes the gamma-cleavage of APP CTF-alpha (also named APP-CTF) by the gamma-secretase complex to generate amyloid-beta, while it reduces the epsilon-cleavage of APP CTF-alpha, leading to a low production of AICD. In Homo sapiens (Human), this protein is Gamma-secretase-activating protein (GSAP).